Consider the following 343-residue polypeptide: Glyceraldehyde-3-phosphate dehydrogenase (343 aa).

Residues 12 to 13 and Gly-114 contribute to the NAD(+) site; that span reads SI. 143–145 contributes to the D-glyceraldehyde 3-phosphate binding site; it reads SCN. The active-site Nucleophile is Cys-144. NAD(+) is bound at residue Arg-172. Position 198–199 (198–199) interacts with D-glyceraldehyde 3-phosphate; that stretch reads HG. Position 307 (Gln-307) interacts with NAD(+).

It belongs to the glyceraldehyde-3-phosphate dehydrogenase family. Homotetramer.

The protein resides in the cytoplasm. The catalysed reaction is D-glyceraldehyde 3-phosphate + phosphate + NADP(+) = (2R)-3-phospho-glyceroyl phosphate + NADPH + H(+). It carries out the reaction D-glyceraldehyde 3-phosphate + phosphate + NAD(+) = (2R)-3-phospho-glyceroyl phosphate + NADH + H(+). It participates in carbohydrate degradation; glycolysis; pyruvate from D-glyceraldehyde 3-phosphate: step 1/5. This Methanocaldococcus jannaschii (strain ATCC 43067 / DSM 2661 / JAL-1 / JCM 10045 / NBRC 100440) (Methanococcus jannaschii) protein is Glyceraldehyde-3-phosphate dehydrogenase (gap).